A 383-amino-acid polypeptide reads, in one-letter code: MDLYEHQARELFKEHGIVVPRAEVTDSPERAREIARALGGRAVVKAQVKTGGRGKAGGVRLAADPAEAEEAARHILGMDIRGHTVDTVMLAEPCEIEREFYVSYVLDRASGGFLAIASAEGGTEIEEVAARRPEAVARIPVDPATGVHTATAVRIADAAGLPPQTVDTLVRLWKVLVREDALLVEVNPLVRTAEGRIVALDGKVTLDDNARFRQSRWGETRQEDADSLEARAGAKGLNYVKLDGEVGVIGNGAGLVMSTLDVVAGCGARPANFLDIGGGASARVMADGLSVVLSDPDVRSVLVNVFGGITACDAVADGIVRALDEVRLTKPLVVRLDGNNAARGRALLDARAHPLVEQATTMDGAARRAARLATAASTAGQAG.

The ATP-grasp domain maps to 9–231 (RELFKEHGIV…QEDADSLEAR (223 aa)). ATP is bound by residues Lys-45, 52 to 54 (GRG), Cys-94, and Glu-99. 2 residues coordinate Mg(2+): Asn-187 and Asp-201. Substrate-binding positions include Asn-251 and 308 to 310 (GIT).

It belongs to the succinate/malate CoA ligase beta subunit family. Heterotetramer of two alpha and two beta subunits. Mg(2+) is required as a cofactor.

The enzyme catalyses succinate + ATP + CoA = succinyl-CoA + ADP + phosphate. The catalysed reaction is GTP + succinate + CoA = succinyl-CoA + GDP + phosphate. Its pathway is carbohydrate metabolism; tricarboxylic acid cycle; succinate from succinyl-CoA (ligase route): step 1/1. Succinyl-CoA synthetase functions in the citric acid cycle (TCA), coupling the hydrolysis of succinyl-CoA to the synthesis of either ATP or GTP and thus represents the only step of substrate-level phosphorylation in the TCA. The beta subunit provides nucleotide specificity of the enzyme and binds the substrate succinate, while the binding sites for coenzyme A and phosphate are found in the alpha subunit. The protein is Succinate--CoA ligase [ADP-forming] subunit beta 2 of Streptomyces coelicolor (strain ATCC BAA-471 / A3(2) / M145).